Here is a 131-residue protein sequence, read N- to C-terminus: Predicted GPI-anchored protein 26 (131 aa).

An N-terminal signal peptide occupies residues 1–18; that stretch reads MHFSKIIAGSALSSVALA. Residues N22 and N104 are each glycosylated (N-linked (GlcNAc...) asparagine). G110 is lipidated: GPI-anchor amidated glycine. The propeptide at 111–131 is removed in mature form; the sequence is AGSKNVASALVGVVAIAAAMM.

The protein localises to the cell membrane. Its function is as follows. GPI-anchored protein involved in proper cell wall integrity. Does not seem to be directly involved in the synthesis of the cell wall. Required for normal virulence in a mouse model of disseminated candidiasis. In Candida albicans (strain SC5314 / ATCC MYA-2876) (Yeast), this protein is Predicted GPI-anchored protein 26 (PGA26).